A 193-amino-acid chain; its full sequence is Probable GTP-binding protein EngB (193 aa).

An EngB-type G domain is found at 22–193 (MYPEISFIGR…ELWQIIEDLL (172 aa)). GTP contacts are provided by residues 30–37 (GRSNVGKS), 57–61 (GKTRT), 75–78 (DLPG), 142–145 (TKMD), and 174–176 (FSS). Mg(2+) is bound by residues Ser-37 and Thr-59.

It belongs to the TRAFAC class TrmE-Era-EngA-EngB-Septin-like GTPase superfamily. EngB GTPase family. It depends on Mg(2+) as a cofactor.

Its function is as follows. Necessary for normal cell division and for the maintenance of normal septation. The protein is Probable GTP-binding protein EngB of Natranaerobius thermophilus (strain ATCC BAA-1301 / DSM 18059 / JW/NM-WN-LF).